Reading from the N-terminus, the 178-residue chain is ATP synthase subunit delta (178 aa).

It belongs to the ATPase delta chain family. As to quaternary structure, F-type ATPases have 2 components, F(1) - the catalytic core - and F(0) - the membrane proton channel. F(1) has five subunits: alpha(3), beta(3), gamma(1), delta(1), epsilon(1). F(0) has three main subunits: a(1), b(2) and c(10-14). The alpha and beta chains form an alternating ring which encloses part of the gamma chain. F(1) is attached to F(0) by a central stalk formed by the gamma and epsilon chains, while a peripheral stalk is formed by the delta and b chains.

It is found in the cell membrane. F(1)F(0) ATP synthase produces ATP from ADP in the presence of a proton or sodium gradient. F-type ATPases consist of two structural domains, F(1) containing the extramembraneous catalytic core and F(0) containing the membrane proton channel, linked together by a central stalk and a peripheral stalk. During catalysis, ATP synthesis in the catalytic domain of F(1) is coupled via a rotary mechanism of the central stalk subunits to proton translocation. Functionally, this protein is part of the stalk that links CF(0) to CF(1). It either transmits conformational changes from CF(0) to CF(1) or is implicated in proton conduction. The sequence is that of ATP synthase subunit delta from Anoxybacillus flavithermus (strain DSM 21510 / WK1).